A 143-amino-acid polypeptide reads, in one-letter code: SsrA-binding protein (143 aa).

Belongs to the SmpB family.

The protein resides in the cytoplasm. In terms of biological role, required for rescue of stalled ribosomes mediated by trans-translation. Binds to transfer-messenger RNA (tmRNA), required for stable association of tmRNA with ribosomes. tmRNA and SmpB together mimic tRNA shape, replacing the anticodon stem-loop with SmpB. tmRNA is encoded by the ssrA gene; the 2 termini fold to resemble tRNA(Ala) and it encodes a 'tag peptide', a short internal open reading frame. During trans-translation Ala-aminoacylated tmRNA acts like a tRNA, entering the A-site of stalled ribosomes, displacing the stalled mRNA. The ribosome then switches to translate the ORF on the tmRNA; the nascent peptide is terminated with the 'tag peptide' encoded by the tmRNA and targeted for degradation. The ribosome is freed to recommence translation, which seems to be the essential function of trans-translation. This chain is SsrA-binding protein, found in Mycoplasmoides gallisepticum (strain R(low / passage 15 / clone 2)) (Mycoplasma gallisepticum).